The primary structure comprises 321 residues: Phosphate acyltransferase (321 aa).

It belongs to the PlsX family. In terms of assembly, homodimer. Probably interacts with PlsY.

The protein localises to the cytoplasm. It carries out the reaction a fatty acyl-[ACP] + phosphate = an acyl phosphate + holo-[ACP]. It functions in the pathway lipid metabolism; phospholipid metabolism. Its function is as follows. Catalyzes the reversible formation of acyl-phosphate (acyl-PO(4)) from acyl-[acyl-carrier-protein] (acyl-ACP). This enzyme utilizes acyl-ACP as fatty acyl donor, but not acyl-CoA. The polypeptide is Phosphate acyltransferase (Chlamydia trachomatis serovar A (strain ATCC VR-571B / DSM 19440 / HAR-13)).